A 78-amino-acid chain; its full sequence is Gas vesicle protein A (78 aa).

The segment at 9–19 (LAEVLDRVLDK) is alpha helix 1. Residues 23–31 (VDVWARISL) form a beta-strand 1 region. Positions 32-34 (VGI) are beta turn. Residues 35–43 (EILTVEARV) form a beta-strand 2 region. The segment at 48 to 67 (VDTFLHYAEEIAKIEQAELT) is alpha helix 2.

Belongs to the gas vesicle GvpA family. In terms of assembly, the gas vesicle shell is 2 nm thick and consists of a single layer of this protein. It forms helical ribs nearly perpendicular to the long axis of the vesicle. Modeled as antiparallel homodimers.

It localises to the gas vesicle shell. Its function is as follows. Gas vesicles are hollow, gas filled proteinaceous nanostructures found in some microorganisms. During planktonic growth they allow positioning of the organism at a favorable depth for light or nutrient acquisition. GvpA forms the protein shell. This gene replaces p-gvpA of H.salinarum very poorly, only about 1% of GVs are formed; the few gas vesicles formed are quite strong with a very high critical collapse pressure (CCP) of 0.213 MPa. Functionally, expression of a 9.5 kb mc-vac DNA fragment containing 2 divergently transcribed regions (gvpD-gvpE-gvpF-gvpG-gvpH-gvpI-gvpJ-gvpK-gvpL-gvpM and gvpA-gvpC-gvpN-gvpO) allows H.volcanii to produce gas vesicles. The sequence is that of Gas vesicle protein A from Haloferax mediterranei (strain ATCC 33500 / DSM 1411 / JCM 8866 / NBRC 14739 / NCIMB 2177 / R-4) (Halobacterium mediterranei).